The following is a 462-amino-acid chain: tRNA(Ile)-lysidine synthase (462 aa).

26–31 serves as a coordination point for ATP; sequence SGGVDS.

This sequence belongs to the tRNA(Ile)-lysidine synthase family.

It localises to the cytoplasm. It carries out the reaction cytidine(34) in tRNA(Ile2) + L-lysine + ATP = lysidine(34) in tRNA(Ile2) + AMP + diphosphate + H(+). Functionally, ligates lysine onto the cytidine present at position 34 of the AUA codon-specific tRNA(Ile) that contains the anticodon CAU, in an ATP-dependent manner. Cytidine is converted to lysidine, thus changing the amino acid specificity of the tRNA from methionine to isoleucine. This is tRNA(Ile)-lysidine synthase from Enterococcus faecalis (strain ATCC 700802 / V583).